The sequence spans 155 residues: Arginine repressor (155 aa).

The protein belongs to the ArgR family.

It is found in the cytoplasm. It participates in amino-acid biosynthesis; L-arginine biosynthesis [regulation]. In terms of biological role, regulates arginine biosynthesis genes. This is Arginine repressor from Mannheimia succiniciproducens (strain KCTC 0769BP / MBEL55E).